A 262-amino-acid polypeptide reads, in one-letter code: Undecaprenyl-diphosphatase (262 aa).

8 consecutive transmembrane segments (helical) span residues 15-35, 38-58, 91-111, 114-134, 149-169, 189-209, 219-239, and 242-262; these read LTEW…IILL, SSAA…IVAF, LYIL…AKYV, IFGS…LLYS, ALIV…RSGA, FLLS…VSPA, VGLL…LSII, and GRLH…LSLL.

It belongs to the UppP family.

It localises to the cell membrane. It catalyses the reaction di-trans,octa-cis-undecaprenyl diphosphate + H2O = di-trans,octa-cis-undecaprenyl phosphate + phosphate + H(+). Its function is as follows. Catalyzes the dephosphorylation of undecaprenyl diphosphate (UPP). In Korarchaeum cryptofilum (strain OPF8), this protein is Undecaprenyl-diphosphatase.